A 248-amino-acid polypeptide reads, in one-letter code: Probable cyclic nucleotide phosphodiesterase CBUA0032 (248 aa).

Fe cation contacts are provided by D13, H15, D52, N82, H152, H191, and H193. Residues H15, D52, and 82–83 (NH) contribute to the AMP site. H193 lines the AMP pocket.

It belongs to the cyclic nucleotide phosphodiesterase class-III family. Fe(2+) serves as cofactor.

The polypeptide is Probable cyclic nucleotide phosphodiesterase CBUA0032 (Coxiella burnetii (strain RSA 493 / Nine Mile phase I)).